A 734-amino-acid polypeptide reads, in one-letter code: Photosystem I P700 chlorophyll a apoprotein A2 (734 aa).

8 consecutive transmembrane segments (helical) span residues 46–69 (IFAS…FHVA), 135–158 (LYTG…LHLQ), 175–199 (LNHH…HVAI), 273–291 (IAHH…GHMY), 330–353 (LHFQ…QHMY), 369–395 (AALY…IFFI), 417–439 (AIIS…LYVH), and 517–535 (FLVH…LILV). [4Fe-4S] cluster is bound by residues C559 and C568. 2 helical membrane passes run 575–596 (AFYL…YWHW) and 643–665 (LSVW…MFLI). Chlorophyll a-binding residues include H654, M662, and Y670. W671 provides a ligand contact to phylloquinone. A helical membrane pass occupies residues 707 to 727 (LVGLAHFSVGYIFTYAAFLIA).

This sequence belongs to the PsaA/PsaB family. As to quaternary structure, the PsaA/B heterodimer binds the P700 chlorophyll special pair and subsequent electron acceptors. PSI consists of a core antenna complex that captures photons, and an electron transfer chain that converts photonic excitation into a charge separation. The eukaryotic PSI reaction center is composed of at least 11 subunits. P700 is a chlorophyll a/chlorophyll a' dimer, A0 is one or more chlorophyll a, A1 is one or both phylloquinones and FX is a shared 4Fe-4S iron-sulfur center. is required as a cofactor.

It is found in the plastid. It localises to the chloroplast thylakoid membrane. The enzyme catalyses reduced [plastocyanin] + hnu + oxidized [2Fe-2S]-[ferredoxin] = oxidized [plastocyanin] + reduced [2Fe-2S]-[ferredoxin]. Functionally, psaA and PsaB bind P700, the primary electron donor of photosystem I (PSI), as well as the electron acceptors A0, A1 and FX. PSI is a plastocyanin-ferredoxin oxidoreductase, converting photonic excitation into a charge separation, which transfers an electron from the donor P700 chlorophyll pair to the spectroscopically characterized acceptors A0, A1, FX, FA and FB in turn. Oxidized P700 is reduced on the lumenal side of the thylakoid membrane by plastocyanin. This is Photosystem I P700 chlorophyll a apoprotein A2 from Coffea arabica (Arabian coffee).